A 274-amino-acid chain; its full sequence is Thiamine kinase (274 aa).

Belongs to the thiamine kinase family.

The catalysed reaction is thiamine + ATP = thiamine phosphate + ADP + H(+). The protein operates within cofactor biosynthesis; thiamine diphosphate biosynthesis; thiamine phosphate from thiamine: step 1/1. Its function is as follows. Catalyzes the ATP-dependent phosphorylation of thiamine to thiamine phosphate. Is involved in thiamine salvage. This chain is Thiamine kinase, found in Escherichia coli O81 (strain ED1a).